The following is a 274-amino-acid chain: Small ribosomal subunit protein uS3 (274 aa).

The KH type-2 domain occupies 38–106 (IRRLLSSGLE…QVQLNILEVK (69 aa)). The disordered stretch occupies residues 215-274 (AAAAPAGADRPRRERPSGTRPRRSGASGTTATGTDAGRAAGGEEAAPDAAAPVEAQSTES). A compositionally biased stretch (low complexity) spans 238 to 266 (SGASGTTATGTDAGRAAGGEEAAPDAAAP).

The protein belongs to the universal ribosomal protein uS3 family. In terms of assembly, part of the 30S ribosomal subunit. Forms a tight complex with proteins S10 and S14.

Functionally, binds the lower part of the 30S subunit head. Binds mRNA in the 70S ribosome, positioning it for translation. This chain is Small ribosomal subunit protein uS3, found in Mycobacterium tuberculosis (strain ATCC 25177 / H37Ra).